A 272-amino-acid chain; its full sequence is Phosphate import ATP-binding protein PstB (272 aa).

The ABC transporter domain maps to 26 to 267; sequence LEIRNLDLRY…PKKRKTEDYI (242 aa). ATP is bound at residue 58–65; the sequence is GPSGCGKS.

Belongs to the ABC transporter superfamily. Phosphate importer (TC 3.A.1.7) family. As to quaternary structure, the complex is composed of two ATP-binding proteins (PstB), two transmembrane proteins (PstC and PstA) and a solute-binding protein (PstS).

Its subcellular location is the cell inner membrane. The catalysed reaction is phosphate(out) + ATP + H2O = ADP + 2 phosphate(in) + H(+). Part of the ABC transporter complex PstSACB involved in phosphate import. Responsible for energy coupling to the transport system. This Shewanella frigidimarina (strain NCIMB 400) protein is Phosphate import ATP-binding protein PstB.